The primary structure comprises 352 residues: MDPFTLEPIGALSGHDDRVWNVAWSPQGDMLASCSGDKTVRIWSRRQPRPSEQWYCSAILDQCHTRTIRSVAWSPTGRALATASFDATVAVWELSSGVWEQVAELEGHENEVKCVAWNPDGRLIATCGRDRSVWIWESMPGREFECVDVKQGHSQDVKAVTWHPSGELLVSAGYDDTIKLWTYDGDEWGCAQTLGGTGTGHESTVWDVCWDPVSRARLASCSDDLTLRLWESRAAPTSTPASAPAGAAAAGFVPSRPDLRCAVTLSGHHRRTVFSLDWAPTGLIATGDGDDSILAEEEASGLLTQPGGQWGCWARVAKAHGADVNCVRWNPAEPRLLASCSDDGLIRLWWLR.

WD repeat units follow at residues 14–53 (GHDD…PSEQ), 63–102 (CHTR…WEQV), 107–146 (GHEN…EFEC), 152–191 (GHSQ…WGCA), 200–240 (GHES…TSTP), 268–306 (HHRR…LTQP), and 319–352 (AHGA…WWLR).

This sequence belongs to the WD repeat CIA1 family.

Its function is as follows. Essential component of the cytosolic iron-sulfur (Fe/S) protein assembly machinery. Required for the maturation of extramitochondrial Fe/S proteins. This chain is Probable cytosolic iron-sulfur protein assembly protein CIAO1 homolog, found in Chlamydomonas reinhardtii (Chlamydomonas smithii).